Here is a 157-residue protein sequence, read N- to C-terminus: Peroxiredoxin Bcp (157 aa).

The Thioredoxin domain maps to 3–156 (IEIGQKAPDL…ALQTLKDMSE (154 aa)). Residue C45 is the Cysteine sulfenic acid (-SOH) intermediate of the active site. A disulfide bridge links C45 with C50.

This sequence belongs to the peroxiredoxin family. BCP/PrxQ subfamily. In terms of assembly, monomer.

It carries out the reaction a hydroperoxide + [thioredoxin]-dithiol = an alcohol + [thioredoxin]-disulfide + H2O. Its function is as follows. Thiol-specific peroxidase that catalyzes the reduction of hydrogen peroxide and organic hydroperoxides to water and alcohols, respectively. Plays a role in cell protection against oxidative stress by detoxifying peroxides and as sensor of hydrogen peroxide-mediated signaling events. The protein is Peroxiredoxin Bcp (ygaF) of Bacillus subtilis (strain 168).